A 450-amino-acid chain; its full sequence is NADP-specific glutamate dehydrogenase (450 aa).

Lysine 111 is an active-site residue.

It belongs to the Glu/Leu/Phe/Val dehydrogenases family. Homohexamer.

The enzyme catalyses L-glutamate + NADP(+) + H2O = 2-oxoglutarate + NH4(+) + NADPH + H(+). In Laccaria bicolor (strain S238N-H82 / ATCC MYA-4686) (Bicoloured deceiver), this protein is NADP-specific glutamate dehydrogenase (GDHA).